Consider the following 396-residue polypeptide: L-lactate dehydrogenase (396 aa).

The FMN hydroxy acid dehydrogenase domain maps to 1 to 380 (MIISAASDYR…SGDSLVQELG (380 aa)). Tyr24 provides a ligand contact to substrate. Ser106 and Gln127 together coordinate FMN. Tyr129 provides a ligand contact to substrate. Thr155 provides a ligand contact to FMN. Arg164 provides a ligand contact to substrate. Lys251 contacts FMN. His275 functions as the Proton acceptor in the catalytic mechanism. Arg278 provides a ligand contact to substrate. Position 306–330 (306–330 (DSGIRNGLDVVRMIALGADTVLLGR)) interacts with FMN.

The protein belongs to the FMN-dependent alpha-hydroxy acid dehydrogenase family. The cofactor is FMN.

Its subcellular location is the cell inner membrane. The enzyme catalyses (S)-lactate + A = pyruvate + AH2. In terms of biological role, catalyzes the conversion of L-lactate to pyruvate. Is coupled to the respiratory chain. The sequence is that of L-lactate dehydrogenase from Salmonella arizonae (strain ATCC BAA-731 / CDC346-86 / RSK2980).